An 859-amino-acid polypeptide reads, in one-letter code: Protein translocase subunit SecA (859 aa).

ATP is bound by residues Q88, 106 to 110 (GEGKT), and D496. A disordered region spans residues 818–838 (FSHQPQSEVKVSRNDPCPCGS). 4 residues coordinate Zn(2+): C834, C836, C845, and C846.

The protein belongs to the SecA family. Monomer and homodimer. Part of the essential Sec protein translocation apparatus which comprises SecA, SecYEG and auxiliary proteins SecDF-YajC and YidC. The cofactor is Zn(2+).

The protein resides in the cell inner membrane. It localises to the cytoplasm. It catalyses the reaction ATP + H2O + cellular proteinSide 1 = ADP + phosphate + cellular proteinSide 2.. Functionally, part of the Sec protein translocase complex. Interacts with the SecYEG preprotein conducting channel. Has a central role in coupling the hydrolysis of ATP to the transfer of proteins into and across the cell membrane, serving as an ATP-driven molecular motor driving the stepwise translocation of polypeptide chains across the membrane. In Wolinella succinogenes (strain ATCC 29543 / DSM 1740 / CCUG 13145 / JCM 31913 / LMG 7466 / NCTC 11488 / FDC 602W) (Vibrio succinogenes), this protein is Protein translocase subunit SecA.